A 292-amino-acid polypeptide reads, in one-letter code: General transcription factor IIE subunit 2 (292 aa).

Met-1 is subject to N-acetylmethionine. Residues 17 to 64 (LSTPVVEKRAVPSESPSSSSSKKKKAKVEHGGSSGSKQNSDHNNGSFN) form a disordered region. Residues 51–63 (GSKQNSDHNNGSF) are compositionally biased toward polar residues. At Ser-62 the chain carries Phosphoserine. Positions 67 to 147 (ALSGSSGYKF…YAFKPKYNLK (81 aa)) form a DNA-binding region, TFIIE beta. An N6-acetyllysine modification is found at Lys-75. The tract at residues 245-277 (SMQESGPKKVASIQRRKKPASQKKRRFKTHNEH) is disordered. Over residues 258–272 (QRRKKPASQKKRRFK) the composition is skewed to basic residues.

It belongs to the TFIIE beta subunit family. As to quaternary structure, tetramer of two alpha and two beta chains. Interacts with FACT subunit SUPT16H. Interacts with ATF7IP. Interacts with SND1. Part of TBP-based Pol II pre-initiation complex (PIC), in which Pol II core assembles with general transcription factors and other specific initiation factors including GTF2E1, GTF2E2, GTF2F1, GTF2F2, TCEA1, ERCC2, ERCC3, GTF2H2, GTF2H3, GTF2H4, GTF2H5, GTF2A1, GTF2A2, GTF2B and TBP; this large multi-subunit PIC complex mediates DNA unwinding and targets Pol II core to the transcription start site where the first phosphodiester bond forms.

Its subcellular location is the nucleus. Recruits TFIIH to the initiation complex and stimulates the RNA polymerase II C-terminal domain kinase and DNA-dependent ATPase activities of TFIIH. Both TFIIH and TFIIE are required for promoter clearance by RNA polymerase. The sequence is that of General transcription factor IIE subunit 2 (Gtf2e2) from Mus musculus (Mouse).